Here is a 274-residue protein sequence, read N- to C-terminus: Nitrogenase iron protein (274 aa).

8-15 (GKGGIGKS) is an ATP binding site. Cys-94 provides a ligand contact to [4Fe-4S] cluster. The residue at position 97 (Arg-97) is an ADP-ribosylarginine; by dinitrogenase reductase ADP-ribosyltransferase. [4Fe-4S] cluster is bound at residue Cys-131.

The protein belongs to the NifH/BchL/ChlL family. As to quaternary structure, homodimer. [4Fe-4S] cluster serves as cofactor. The reversible ADP-ribosylation of Arg-97 inactivates the nitrogenase reductase and regulates nitrogenase activity.

It carries out the reaction N2 + 8 reduced [2Fe-2S]-[ferredoxin] + 16 ATP + 16 H2O = H2 + 8 oxidized [2Fe-2S]-[ferredoxin] + 2 NH4(+) + 16 ADP + 16 phosphate + 6 H(+). In terms of biological role, the key enzymatic reactions in nitrogen fixation are catalyzed by the nitrogenase complex, which has 2 components: the iron protein and the molybdenum-iron protein. In Azobacteroides pseudotrichonymphae genomovar. CFP2, this protein is Nitrogenase iron protein.